The sequence spans 347 residues: E3 ubiquitin-protein ligase RNF146-B (347 aa).

An RING-type zinc finger spans residues 37–75 (CAICLQTCVHPVSLPCKHVFCYLCVKGASWLGKRCALCR). Residues lysine 85, lysine 95, lysine 131, and lysine 176 each participate in a glycyl lysine isopeptide (Lys-Gly) (interchain with G-Cter in ubiquitin) cross-link. One can recognise a WWE domain in the interval 92 to 168 (EELKAASRGN…EHGRRRKIKR (77 aa)). Disordered regions lie at residues 196–241 (SSAD…GTSL) and 257–347 (ERSH…VTEV). The segment covering 203–217 (SVPAQSGASVQSSSV) has biased composition (low complexity). The segment covering 282–296 (SIEETESDASSDSED) has biased composition (acidic residues). Phosphoserine is present on residues serine 288 and serine 292. Over residues 304–322 (HSLTQQRLLVPNPSQTVSD) the composition is skewed to polar residues.

As to quaternary structure, interacts with poly-ADP-ribosylated AXIN1, AXIN2, BLZF1 and CASC3. Ubiquitinated; autoubiquitinated. Autoubiquitination is enhanced upon poly(ADP-ribose)-binding.

Its subcellular location is the cytoplasm. The protein resides in the cytosol. The enzyme catalyses S-ubiquitinyl-[E2 ubiquitin-conjugating enzyme]-L-cysteine + [acceptor protein]-L-lysine = [E2 ubiquitin-conjugating enzyme]-L-cysteine + N(6)-ubiquitinyl-[acceptor protein]-L-lysine.. The protein operates within protein modification; protein ubiquitination. Functionally, E3 ubiquitin-protein ligase that specifically binds poly-ADP-ribosylated proteins and mediates their ubiquitination and subsequent degradation. Acts as an activator of the Wnt signaling pathway by mediating the ubiquitination of poly-ADP-ribosylated AXIN1 and AXIN2, 2 key components of the beta-catenin destruction complex. Acts in cooperation with tankyrase proteins (TNKS and TNKS2), which mediate poly-ADP-ribosylation of target proteins AXIN1, AXIN2, BLZF1, CASC3, TNKS and TNKS2. Recognizes and binds tankyrase-dependent poly-ADP-ribosylated proteins via its WWE domain and mediates their ubiquitination. In Bos taurus (Bovine), this protein is E3 ubiquitin-protein ligase RNF146-B (RNF146B).